Consider the following 320-residue polypeptide: tRNA-cytidine(32) 2-sulfurtransferase (320 aa).

Residues 54 to 59 carry the PP-loop motif motif; it reads SGGKDS. [4Fe-4S] cluster-binding residues include Cys-129, Cys-132, and Cys-220.

This sequence belongs to the TtcA family. In terms of assembly, homodimer. It depends on Mg(2+) as a cofactor. The cofactor is [4Fe-4S] cluster.

Its subcellular location is the cytoplasm. It catalyses the reaction cytidine(32) in tRNA + S-sulfanyl-L-cysteinyl-[cysteine desulfurase] + AH2 + ATP = 2-thiocytidine(32) in tRNA + L-cysteinyl-[cysteine desulfurase] + A + AMP + diphosphate + H(+). The protein operates within tRNA modification. Catalyzes the ATP-dependent 2-thiolation of cytidine in position 32 of tRNA, to form 2-thiocytidine (s(2)C32). The sulfur atoms are provided by the cysteine/cysteine desulfurase (IscS) system. This chain is tRNA-cytidine(32) 2-sulfurtransferase, found in Bordetella parapertussis (strain 12822 / ATCC BAA-587 / NCTC 13253).